The sequence spans 344 residues: N-acetyl-gamma-glutamyl-phosphate reductase (344 aa).

C150 is an active-site residue.

It belongs to the NAGSA dehydrogenase family. Type 1 subfamily.

It localises to the cytoplasm. The enzyme catalyses N-acetyl-L-glutamate 5-semialdehyde + phosphate + NADP(+) = N-acetyl-L-glutamyl 5-phosphate + NADPH + H(+). It functions in the pathway amino-acid biosynthesis; L-arginine biosynthesis; N(2)-acetyl-L-ornithine from L-glutamate: step 3/4. Functionally, catalyzes the NADPH-dependent reduction of N-acetyl-5-glutamyl phosphate to yield N-acetyl-L-glutamate 5-semialdehyde. The chain is N-acetyl-gamma-glutamyl-phosphate reductase from Pseudomonas entomophila (strain L48).